We begin with the raw amino-acid sequence, 513 residues long: MGVFSNLRGPRAGATHDEFPATNGSPSSSSSPSSSIKRKLSNLLPLCVALVVIAEIGFLGRLDKVALVDTLTDFFTQSPSLSQSPPARSDRKKIGLFTDRSCEEWLMREDSVTYSRDFTKDPIFISGGEKDFQWCSVDCTFGDSSGKTPDAAFGLGQKPGTLSIIRSMESAQYYPENDLAQARRRGYDIVMTTSLSSDVPVGYFSWAEYDIMSPVQPKTERAIAAAFISNCGARNFRLQALEALMKTNIKIDSYGGCHRNRDGKVDKVEALKRYKFSLAFENTNEEDYVTEKFFQSLVAGSVPVVVGPPNIEEFAPASDSFLHIKTMEDVEPVAKRMKYLAANPAAYNQTLRWKYEGPSDSFKALVDMAAVHSSCRLCIFLATRVREQEEESPNFKKRPCKCSRGGSDTVYHVFVRERGRFEMESVFLRGKSVTQEALESAVLAKFKSLKHEAVWKKERPGNLKGDKELKIHRIYPLGLTQRQALYNFKFEGNSSLSSHIQNNPCAKFEVVFV.

Residues 1-34 (MGVFSNLRGPRAGATHDEFPATNGSPSSSSSPSS) form a disordered region. Topologically, residues 1 to 39 (MGVFSNLRGPRAGATHDEFPATNGSPSSSSSPSSSIKRK) are cytoplasmic. Positions 25-34 (SPSSSSSPSS) are enriched in low complexity. Residues 40-60 (LSNLLPLCVALVVIAEIGFLG) form a helical; Signal-anchor for type II membrane protein membrane-spanning segment. Over 61 to 513 (RLDKVALVDT…PCAKFEVVFV (453 aa)) the chain is Lumenal. Asparagine 348 and asparagine 493 each carry an N-linked (GlcNAc...) asparagine glycan.

The protein belongs to the glycosyltransferase 10 family.

It localises to the golgi apparatus. It is found in the golgi stack membrane. Its pathway is protein modification; protein glycosylation. May be involved in cell wall biosynthesis. May act as a fucosyltransferase. This Arabidopsis thaliana (Mouse-ear cress) protein is Putative fucosyltransferase-like protein (FUT12).